The primary structure comprises 607 residues: Rap1 GTPase-GDP dissociation stimulator 1-A (607 aa).

ARM repeat units follow at residues 79-118 (ELMR…NICY), 170-211 (DSLQ…NLAE), 347-390 (DGNC…NLAI), 391-431 (PVVN…MLID), and 479-519 (SKDV…LIAA).

In terms of assembly, interacts with ralB. Probably interacts with the post-translationally isoprenylated (geranyl-geranylation) forms of ral proteins. Interacts with both GDP-bound and GTP-bound forms of ralA, but interaction is much stronger with ralA-GDP. As to expression, weakly expressed in adult tissues with highest levels found in spleen, kidney, skin and A6 cells.

The protein localises to the cytoplasm. It is found in the cytosol. The protein resides in the endoplasmic reticulum. It localises to the mitochondrion. Functionally, stimulates GDP/GTP exchange reaction of a group of small GTP-binding proteins (G proteins) including Rap1a/Rap1b, RhoA, RhoB and KRas, by stimulating the dissociation of GDP from and the subsequent binding of GTP to each small G protein. This chain is Rap1 GTPase-GDP dissociation stimulator 1-A (rap1gds1-a), found in Xenopus laevis (African clawed frog).